Reading from the N-terminus, the 461-residue chain is Elongation factor 1-alpha (461 aa).

Residue Gly-2 is modified to N,N,N-trimethylglycine. Residues 5-242 (KIHINIVVIG…DAILPPSRPT (238 aa)) enclose the tr-type G domain. Positions 14–21 (GHVDSGKS) are G1. 14 to 21 (GHVDSGKS) contributes to the GTP binding site. The interval 70–74 (GITID) is G2. The interval 91 to 94 (DAPG) is G3. GTP is bound by residues 153 to 156 (NKMD) and 194 to 196 (SGW). The interval 153–156 (NKMD) is G4. The interval 194–196 (SGW) is G5. 5-glutamyl glycerylphosphorylethanolamine occurs at positions 301 and 374.

The protein belongs to the TRAFAC class translation factor GTPase superfamily. Classic translation factor GTPase family. EF-Tu/EF-1A subfamily.

The protein localises to the cytoplasm. It carries out the reaction GTP + H2O = GDP + phosphate + H(+). Its function is as follows. Translation elongation factor that catalyzes the GTP-dependent binding of aminoacyl-tRNA (aa-tRNA) to the A-site of ribosomes during the elongation phase of protein synthesis. Base pairing between the mRNA codon and the aa-tRNA anticodon promotes GTP hydrolysis, releasing the aa-tRNA from EEF1A1 and allowing its accommodation into the ribosome. The growing protein chain is subsequently transferred from the P-site peptidyl tRNA to the A-site aa-tRNA, extending it by one amino acid through ribosome-catalyzed peptide bond formation. In Oryzias latipes (Japanese rice fish), this protein is Elongation factor 1-alpha (eef1a).